The following is a 330-amino-acid chain: Aspartate--ammonia ligase (330 aa).

It belongs to the class-II aminoacyl-tRNA synthetase family. AsnA subfamily.

It is found in the cytoplasm. It catalyses the reaction L-aspartate + NH4(+) + ATP = L-asparagine + AMP + diphosphate + H(+). It functions in the pathway amino-acid biosynthesis; L-asparagine biosynthesis; L-asparagine from L-aspartate (ammonia route): step 1/1. This is Aspartate--ammonia ligase from Salmonella newport (strain SL254).